The chain runs to 1050 residues: NAD-specific glutamate dehydrogenase (1050 aa).

The segment at 1 to 39 (MDSPSAPVPAHKLVDRLKDQTPRHPSPQPTHVSYPKVNG) is disordered. The segment covering 12-22 (KLVDRLKDQTP) has biased composition (basic and acidic residues). The active site involves Lys-594.

It belongs to the Glu/Leu/Phe/Val dehydrogenases family. Homotetramer.

The catalysed reaction is L-glutamate + NAD(+) + H2O = 2-oxoglutarate + NH4(+) + NADH + H(+). The protein is NAD-specific glutamate dehydrogenase (gdh-1) of Neurospora crassa (strain ATCC 24698 / 74-OR23-1A / CBS 708.71 / DSM 1257 / FGSC 987).